The chain runs to 394 residues: MEFLQNIKKNYDEWTRITPQGLLYDRALFWLFVILLLIGLVAVTSASIPYSSRLFNDPFYFAKRDAIYVLLSLLTCYISLQISSSQWEKWHAKIFLFSVILLLLVPFIGTSVNGAKRWISLGILNFQPAEFAKLALTCFLASYFTRRYDEVRSRHVSIFKPFIVMLVLGCFLLLQPDLGSTVVLFIIMSGMLFIVGAKILQFVGLIALGGILFVWLVLTASYRLKRFIGFLEPFKEPYGTGFQLTNSLIAFGRGEITGEGLGNSIQKLDYLPEAHTDFIMAIIGEEFGFIGILIVILLLGLLIFRAMKIGRESLMLEQRFRGFFALGIGFWIFFQGFVNLGMALGMLPTKGLTFPLVSYGGSSIIIMSATIGILLRIDHENRLFRIGQARLRDD.

Topologically, residues 1 to 27 are cytoplasmic; sequence MEFLQNIKKNYDEWTRITPQGLLYDRA. A helical membrane pass occupies residues 28–48; that stretch reads LFWLFVILLLIGLVAVTSASI. The Periplasmic portion of the chain corresponds to 49–66; that stretch reads PYSSRLFNDPFYFAKRDA. Residues 67 to 87 form a helical membrane-spanning segment; it reads IYVLLSLLTCYISLQISSSQW. Residues 88–93 are Cytoplasmic-facing; that stretch reads EKWHAK. A helical membrane pass occupies residues 94–114; it reads IFLFSVILLLLVPFIGTSVNG. Over 115-120 the chain is Periplasmic; the sequence is AKRWIS. The chain crosses the membrane as a helical span at residues 121 to 141; the sequence is LGILNFQPAEFAKLALTCFLA. Over 142–155 the chain is Cytoplasmic; it reads SYFTRRYDEVRSRH. A run of 2 helical transmembrane segments spans residues 156 to 176 and 177 to 197; these read VSIFKPFIVMLVLGCFLLLQP and DLGSTVVLFIIMSGMLFIVGA. A topological domain (cytoplasmic) is located at residue Lys198. Residues 199–219 form a helical membrane-spanning segment; it reads ILQFVGLIALGGILFVWLVLT. Topologically, residues 220-277 are periplasmic; the sequence is ASYRLKRFIGFLEPFKEPYGTGFQLTNSLIAFGRGEITGEGLGNSIQKLDYLPEAHTD. Residues 278-298 form a helical membrane-spanning segment; sequence FIMAIIGEEFGFIGILIVILL. At 299-322 the chain is on the cytoplasmic side; it reads LGLLIFRAMKIGRESLMLEQRFRG. Residues 323–343 traverse the membrane as a helical segment; it reads FFALGIGFWIFFQGFVNLGMA. The Periplasmic segment spans residues 344 to 353; that stretch reads LGMLPTKGLT. The helical transmembrane segment at 354 to 374 threads the bilayer; it reads FPLVSYGGSSIIIMSATIGIL. Residues 375-394 are Cytoplasmic-facing; the sequence is LRIDHENRLFRIGQARLRDD.

The protein belongs to the SEDS family. FtsW subfamily.

The protein localises to the cell inner membrane. The enzyme catalyses [GlcNAc-(1-&gt;4)-Mur2Ac(oyl-L-Ala-gamma-D-Glu-L-Lys-D-Ala-D-Ala)](n)-di-trans,octa-cis-undecaprenyl diphosphate + beta-D-GlcNAc-(1-&gt;4)-Mur2Ac(oyl-L-Ala-gamma-D-Glu-L-Lys-D-Ala-D-Ala)-di-trans,octa-cis-undecaprenyl diphosphate = [GlcNAc-(1-&gt;4)-Mur2Ac(oyl-L-Ala-gamma-D-Glu-L-Lys-D-Ala-D-Ala)](n+1)-di-trans,octa-cis-undecaprenyl diphosphate + di-trans,octa-cis-undecaprenyl diphosphate + H(+). It participates in cell wall biogenesis; peptidoglycan biosynthesis. Peptidoglycan polymerase that is essential for cell division. This chain is Probable peptidoglycan glycosyltransferase FtsW, found in Haemophilus influenzae (strain ATCC 51907 / DSM 11121 / KW20 / Rd).